The following is a 137-amino-acid chain: Nucleoside diphosphate kinase (137 aa).

The ATP site is built by Lys10, Phe58, Arg86, Thr92, Arg103, and Asn113. His116 (pros-phosphohistidine intermediate) is an active-site residue.

The protein belongs to the NDK family. In terms of assembly, homotetramer. Requires Mg(2+) as cofactor.

The protein localises to the cytoplasm. It catalyses the reaction a 2'-deoxyribonucleoside 5'-diphosphate + ATP = a 2'-deoxyribonucleoside 5'-triphosphate + ADP. The enzyme catalyses a ribonucleoside 5'-diphosphate + ATP = a ribonucleoside 5'-triphosphate + ADP. Its function is as follows. Major role in the synthesis of nucleoside triphosphates other than ATP. The ATP gamma phosphate is transferred to the NDP beta phosphate via a ping-pong mechanism, using a phosphorylated active-site intermediate. This is Nucleoside diphosphate kinase from Helicobacter pylori (strain ATCC 700392 / 26695) (Campylobacter pylori).